The following is a 576-amino-acid chain: Lipoprotein LpqB (576 aa).

Residues 1-16 (MRRVTRTIAAAGAAIA) form the signal peptide. Cys-17 carries N-palmitoyl cysteine lipidation. Residue Cys-17 is the site of S-diacylglycerol cysteine attachment.

The protein belongs to the LpqB lipoprotein family.

The protein resides in the cell membrane. This Bifidobacterium longum (strain NCC 2705) protein is Lipoprotein LpqB.